Consider the following 201-residue polypeptide: MSCLFVISAPSGAGKTSVIRTLLQTDINLTLSISYTTRPPRRDEKNGHDYFFVDHATFKDMQARGEFLESAEVHGNLYGTSRKWIEETMAAEQDVLLEIDCQGAQQIRTVYPQAASIFILPPSMEALKQRLEQRGQDENKVIERRLAAARSEISHVNRFDYVVVNHELETAARDVASIVQAERLKTIRQLVRQRSLIAEFS.

Residues 2–180 (SCLFVISAPS…AARDVASIVQ (179 aa)) form the Guanylate kinase-like domain. ATP is bound at residue 9–16 (APSGAGKT).

It belongs to the guanylate kinase family.

Its subcellular location is the cytoplasm. The catalysed reaction is GMP + ATP = GDP + ADP. In terms of biological role, essential for recycling GMP and indirectly, cGMP. The polypeptide is Guanylate kinase (Nitrosomonas europaea (strain ATCC 19718 / CIP 103999 / KCTC 2705 / NBRC 14298)).